The primary structure comprises 439 residues: Xylose isomerase (439 aa).

Active-site residues include His-103 and Asp-106. Positions 234, 270, 273, 298, 309, 311, and 341 each coordinate Mg(2+).

It belongs to the xylose isomerase family. In terms of assembly, homotetramer. Mg(2+) serves as cofactor.

It is found in the cytoplasm. The catalysed reaction is alpha-D-xylose = alpha-D-xylulofuranose. This chain is Xylose isomerase, found in Bacteroides fragilis (strain ATCC 25285 / DSM 2151 / CCUG 4856 / JCM 11019 / LMG 10263 / NCTC 9343 / Onslow / VPI 2553 / EN-2).